The sequence spans 286 residues: Pyridoxal kinase PdxY (286 aa).

Substrate contacts are provided by residues Ser9 and 44-45; that span reads TQ. ATP is bound by residues Asp111, Glu148, and Lys181. Asp222 contributes to the substrate binding site.

The protein belongs to the pyridoxine kinase family. PdxY subfamily. Homodimer. Requires Mg(2+) as cofactor.

The catalysed reaction is pyridoxal + ATP = pyridoxal 5'-phosphate + ADP + H(+). It participates in cofactor metabolism; pyridoxal 5'-phosphate salvage; pyridoxal 5'-phosphate from pyridoxal: step 1/1. Functionally, pyridoxal kinase involved in the salvage pathway of pyridoxal 5'-phosphate (PLP). Catalyzes the phosphorylation of pyridoxal to PLP. In Actinobacillus succinogenes (strain ATCC 55618 / DSM 22257 / CCUG 43843 / 130Z), this protein is Pyridoxal kinase PdxY.